Here is a 115-residue protein sequence, read N- to C-terminus: U3-lycotoxin-Ls1g (115 aa).

An N-terminal signal peptide occupies residues Met1–Ala20. Residues Glu21–Arg44 constitute a propeptide that is removed on maturation. 4 disulfides stabilise this stretch: Cys48–Cys63, Cys55–Cys72, Cys62–Cys87, and Cys74–Cys85.

This sequence belongs to the neurotoxin 19 (CSTX) family. 01 subfamily. As to expression, expressed by the venom gland.

The protein resides in the secreted. In Lycosa singoriensis (Wolf spider), this protein is U3-lycotoxin-Ls1g.